Reading from the N-terminus, the 215-residue chain is uncharacterized protein (215 aa).

This is an uncharacterized protein from Acanthamoeba polyphaga (Amoeba).